Here is a 153-residue protein sequence, read N- to C-terminus: MTHDNKLQVEAIKRGTVIDHIPAQIGFKLLSLFKLTETDQRITIGLNLPSGEMGRKDLIKIENTFLSEEQVDQLALYAPQATVNRIDNYEVVGKSRPSLPERIDNVLVCPNSNCISHAEPVSSSFAVRKRANDIALKCKYCEKEFSHNVVLAN.

Zn(2+)-binding residues include cysteine 109, cysteine 114, cysteine 138, and cysteine 141.

Belongs to the PyrI family. In terms of assembly, contains catalytic and regulatory chains. Zn(2+) is required as a cofactor.

Involved in allosteric regulation of aspartate carbamoyltransferase. The sequence is that of Aspartate carbamoyltransferase regulatory chain from Shigella flexneri serotype 5b (strain 8401).